We begin with the raw amino-acid sequence, 186 residues long: Ribosome-recycling factor (186 aa).

The protein belongs to the RRF family.

The protein resides in the cytoplasm. In terms of biological role, responsible for the release of ribosomes from messenger RNA at the termination of protein biosynthesis. May increase the efficiency of translation by recycling ribosomes from one round of translation to another. In Cupriavidus necator (strain ATCC 17699 / DSM 428 / KCTC 22496 / NCIMB 10442 / H16 / Stanier 337) (Ralstonia eutropha), this protein is Ribosome-recycling factor.